Here is a 280-residue protein sequence, read N- to C-terminus: MRLYRDRAVVLRQHKLGEADRIVTLLTRDHGLVRAVAKGVRRTRSKFGARLEPFAHIDVQLHPGRNLDIVTQVQAIDAFAADIVSDYGRYTTACAMLETAERLAGEERAPMPDLHRLTVAALRAIADGRRARELVLDSYLLRAMAIAGWAPALTECARCAAPGPHRAFHVAAGGSVCVHCRPSGSSTPPQAVLELMSALHDGDWEYAESSTPPHRSQASGLIAAHLQWHLERQLRTLPLVERGYRVDRTVAEQRAALVRQDMAHGNHTGQEDLPATASGA.

A disordered region spans residues 261–280; it reads DMAHGNHTGQEDLPATASGA.

Belongs to the RecO family.

Its function is as follows. Involved in DNA repair and RecF pathway recombination. This chain is DNA repair protein RecO, found in Mycolicibacterium smegmatis (strain ATCC 700084 / mc(2)155) (Mycobacterium smegmatis).